The sequence spans 311 residues: Dehydrogenase/reductase SDR family member 7C (311 aa).

An N-terminal signal peptide occupies residues 1 to 18 (MGLMAVLMLPLLLLGISG). NAD(+)-binding residues include serine 47, leucine 49, tyrosine 191, lysine 195, and serine 226. Residue tyrosine 191 is the Proton acceptor of the active site.

Belongs to the short-chain dehydrogenases/reductases (SDR) family. As to expression, expressed in skeletal muscle and cardiac muscle. Also expressed in liver, kidney, adipocytes and skin.

It is found in the sarcoplasmic reticulum membrane. It carries out the reaction all-trans-retinol + NAD(+) = all-trans-retinal + NADH + H(+). Its function is as follows. NADH-dependent oxidoreductase which catalyzes the oxidation of all-trans-retinol to all-trans-retinal. Plays a role in the regulation of cardiac and skeletal muscle metabolic functions. Maintains Ca(2+) intracellular homeostasis by repressing Ca(2+) release from the sarcoplasmic reticulum (SR) in myotubes, possibly through local alternations in NAD/NADH or retinol/retinal. Also plays a role in Ca(2+) homeostasis by controlling Ca(2+) overload in the cytosol and the SR in myotubes. Involved in glucose uptake into skeletal muscles and muscle performance by activating PI3K and mTORC2-mediated AKT1 phosphorylation signaling pathways, possibly through the action of its downstream catalytic product all-trans-retinoic acid. This is Dehydrogenase/reductase SDR family member 7C from Mus musculus (Mouse).